We begin with the raw amino-acid sequence, 402 residues long: D-galactonate dehydratase family member EGBG_02030 (402 aa).

Residue Asp207 coordinates Mg(2+). His209 contributes to the D-arabinonate binding site. Glu233 and Glu259 together coordinate Mg(2+). The D-arabinonate site is built by Glu259, Arg280, His309, and Glu336.

Belongs to the mandelate racemase/muconate lactonizing enzyme family. GalD subfamily.

Its function is as follows. Has no detectable activity with D-mannonate and with a panel of 70 other acid sugars (in vitro), in spite of the conservation of the residues that are expected to be important for catalytic activity and cofactor binding. May have evolved a divergent function. The sequence is that of D-galactonate dehydratase family member EGBG_02030 from Enterococcus gallinarum (strain EG2).